Consider the following 531-residue polypeptide: Pyruvate kinase (531 aa).

Arginine 86 is a substrate binding site. Residues asparagine 88, serine 90, aspartate 121, and threonine 122 each coordinate K(+). Asparagine 88 to histidine 91 contributes to the ATP binding site. Arginine 128 and lysine 211 together coordinate ATP. Position 277 (glutamate 277) interacts with Mg(2+). The substrate site is built by glycine 300, aspartate 301, and threonine 333. Aspartate 301 is a Mg(2+) binding site.

The protein belongs to the pyruvate kinase family. As to quaternary structure, homotetramer. The cofactor is Mg(2+). It depends on K(+) as a cofactor.

It carries out the reaction pyruvate + ATP = phosphoenolpyruvate + ADP + H(+). Its pathway is carbohydrate degradation; glycolysis; pyruvate from D-glyceraldehyde 3-phosphate: step 5/5. This is Pyruvate kinase (PYK) from Eimeria tenella (Coccidian parasite).